The primary structure comprises 503 residues: uncharacterized protein (503 aa).

Belongs to the Mg-chelatase subunits D/I family. ComM subfamily.

This is an uncharacterized protein from Mycobacterium bovis (strain ATCC BAA-935 / AF2122/97).